The chain runs to 631 residues: Chaperone protein DnaK (631 aa).

At Thr197 the chain carries Phosphothreonine; by autocatalysis. The segment at 599 to 631 (AQSDAGAAGSASEENTTSNEKVVDADFEDVEKK) is disordered. A compositionally biased stretch (low complexity) spans 603 to 612 (AGAAGSASEE).

It belongs to the heat shock protein 70 family.

Its function is as follows. Acts as a chaperone. The sequence is that of Chaperone protein DnaK from Rickettsia bellii (strain RML369-C).